The sequence spans 426 residues: N-formyl-4-amino-5-aminomethyl-2-methylpyrimidine deformylase (426 aa).

Residues 1-31 (MDQQIYSLQKKVEEHKEELIQLAKTLISYQT) adopt a coiled-coil conformation. A Zn(2+)-binding site is contributed by H89. D91 is a catalytic residue. Position 122 (D122) interacts with Zn(2+). E156 serves as the catalytic Proton acceptor. Residues E157, D180, and H394 each contribute to the Zn(2+) site.

The protein belongs to the peptidase M20A family. Zn(2+) serves as cofactor. Co(2+) is required as a cofactor.

It carries out the reaction N-formyl-4-amino-5-aminomethyl-2-methylpyrimidine + H2O = 4-amino-5-aminomethyl-2-methylpyrimidine + formate. Its pathway is cofactor biosynthesis; thiamine diphosphate biosynthesis. Catalyzes the deformylation of the formylaminopyrimidine N-formyl-4-amino-5-aminomethyl-2-methylpyrimidine (FAMP) to give the corresponding aminopyrimidine. This chain is N-formyl-4-amino-5-aminomethyl-2-methylpyrimidine deformylase, found in Bacillus subtilis (strain 168).